We begin with the raw amino-acid sequence, 398 residues long: Acetate kinase (398 aa).

N7 provides a ligand contact to Mg(2+). K14 provides a ligand contact to ATP. R91 contacts substrate. D148 (proton donor/acceptor) is an active-site residue. Residues 208–212 (HIGNG), 283–285 (DLR), and 331–335 (GVGEN) contribute to the ATP site. E385 provides a ligand contact to Mg(2+).

The protein belongs to the acetokinase family. Homodimer. It depends on Mg(2+) as a cofactor. The cofactor is Mn(2+).

Its subcellular location is the cytoplasm. The enzyme catalyses acetate + ATP = acetyl phosphate + ADP. Its pathway is metabolic intermediate biosynthesis; acetyl-CoA biosynthesis; acetyl-CoA from acetate: step 1/2. Its function is as follows. Catalyzes the formation of acetyl phosphate from acetate and ATP. Can also catalyze the reverse reaction. This Porphyromonas gingivalis (strain ATCC 33277 / DSM 20709 / CIP 103683 / JCM 12257 / NCTC 11834 / 2561) protein is Acetate kinase.